The following is a 122-amino-acid chain: Large ribosomal subunit protein uL14 (122 aa).

Belongs to the universal ribosomal protein uL14 family. In terms of assembly, part of the 50S ribosomal subunit. Forms a cluster with proteins L3 and L19. In the 70S ribosome, L14 and L19 interact and together make contacts with the 16S rRNA in bridges B5 and B8.

In terms of biological role, binds to 23S rRNA. Forms part of two intersubunit bridges in the 70S ribosome. This chain is Large ribosomal subunit protein uL14, found in Geotalea daltonii (strain DSM 22248 / JCM 15807 / FRC-32) (Geobacter daltonii).